Consider the following 119-residue polypeptide: Methylglyoxal synthase (119 aa).

The MGS-like domain maps to 1–119; the sequence is MKIALIAHDK…ESAKLIMADI (119 aa). Residues His-8, Lys-12, 34–37, and 54–55 contribute to the substrate site; these read TGTT and SG. Asp-60 functions as the Proton donor/acceptor in the catalytic mechanism. His-87 contacts substrate.

The protein belongs to the methylglyoxal synthase family.

The catalysed reaction is dihydroxyacetone phosphate = methylglyoxal + phosphate. In terms of biological role, catalyzes the formation of methylglyoxal from dihydroxyacetone phosphate. The protein is Methylglyoxal synthase of Clostridium perfringens (strain 13 / Type A).